The sequence spans 65 residues: DNA-directed RNA polymerase subunit Rpo10 (65 aa).

Residues Cys-7, Cys-10, Cys-44, and Cys-45 each coordinate Zn(2+).

Belongs to the archaeal Rpo10/eukaryotic RPB10 RNA polymerase subunit family. As to quaternary structure, part of the RNA polymerase complex. Zn(2+) is required as a cofactor.

It localises to the cytoplasm. The catalysed reaction is RNA(n) + a ribonucleoside 5'-triphosphate = RNA(n+1) + diphosphate. DNA-dependent RNA polymerase (RNAP) catalyzes the transcription of DNA into RNA using the four ribonucleoside triphosphates as substrates. This Thermococcus onnurineus (strain NA1) protein is DNA-directed RNA polymerase subunit Rpo10.